The sequence spans 50 residues: Omega-conotoxin Bu8 (50 aa).

Residue A1 is a signal peptide. Residues 2 to 24 constitute a propeptide that is removed on maturation; sequence EDSRGTQLHRALRKATKLSESTR. 3 disulfides stabilise this stretch: C25–C40, C32–C44, and C39–C49. At C49 the chain carries Cysteine amide.

The protein belongs to the conotoxin O1 superfamily. As to expression, expressed by the venom duct.

The protein localises to the secreted. Omega-conotoxins act at presynaptic membranes, they bind and block voltage-gated calcium channels (Cav). This toxin selectively and potently inhibits depolarization-activated rat Cav2.2/CACNA1B currents (IC(50)=89 nM), when coexpressed with alpha-2/delta-1 (CACNA2D1) and beta-3 (CACNB3) subunits. In vivo, is lethal to fish and displays potent analgesic activity in mice pain models of hot plate and acetic acid writhing but has fewer side effects on mouse motor function and lower toxicity in goldfish. Shows higher or similar analgesic activity in the pain models mentioned above compared to MVIIA, and lower side effects. In addition, it blocks Cav2.2/CACNA1B more rapidly than MVIIA and also dissociates more rapidly. The chain is Omega-conotoxin Bu8 from Conus bullatus (Bubble cone).